Consider the following 173-residue polypeptide: RNA pyrophosphohydrolase (173 aa).

The region spanning 6 to 149 is the Nudix hydrolase domain; sequence GFRANVGIIL…KRGVYRRALR (144 aa). A Nudix box motif is present at residues 38–59; it reads GGIDEGETPLDAMYRELWEEVG.

Belongs to the Nudix hydrolase family. RppH subfamily. A divalent metal cation is required as a cofactor.

Its function is as follows. Accelerates the degradation of transcripts by removing pyrophosphate from the 5'-end of triphosphorylated RNA, leading to a more labile monophosphorylated state that can stimulate subsequent ribonuclease cleavage. This Psychrobacter sp. (strain PRwf-1) protein is RNA pyrophosphohydrolase.